A 199-amino-acid chain; its full sequence is Recombination protein RecR (199 aa).

The C4-type zinc-finger motif lies at 58-73 (CQRCNNFSEEAVCQRC). The Toprim domain occupies 81–176 (ATLCVVEMPA…KVSRISRGVP (96 aa)).

Belongs to the RecR family.

In terms of biological role, may play a role in DNA repair. It seems to be involved in an RecBC-independent recombinational process of DNA repair. It may act with RecF and RecO. In Azoarcus sp. (strain BH72), this protein is Recombination protein RecR.